A 488-amino-acid chain; its full sequence is Glutamyl-tRNA(Gln) amidotransferase subunit A (488 aa).

Catalysis depends on charge relay system residues K77 and S152. S176 functions as the Acyl-ester intermediate in the catalytic mechanism.

Belongs to the amidase family. GatA subfamily. In terms of assembly, heterotrimer of A, B and C subunits.

It catalyses the reaction L-glutamyl-tRNA(Gln) + L-glutamine + ATP + H2O = L-glutaminyl-tRNA(Gln) + L-glutamate + ADP + phosphate + H(+). Functionally, allows the formation of correctly charged Gln-tRNA(Gln) through the transamidation of misacylated Glu-tRNA(Gln) in organisms which lack glutaminyl-tRNA synthetase. The reaction takes place in the presence of glutamine and ATP through an activated gamma-phospho-Glu-tRNA(Gln). This chain is Glutamyl-tRNA(Gln) amidotransferase subunit A, found in Streptococcus pyogenes serotype M2 (strain MGAS10270).